We begin with the raw amino-acid sequence, 680 residues long: ATPase family AAA domain-containing protein FIGL1 (680 aa).

Disordered regions lie at residues 214 to 234 (YGNS…NQDR), 250 to 275 (FGTK…GAPN), and 288 to 352 (VRQK…GGKT). Over residues 295 to 308 (TESPSSCLSPQSDK) the composition is skewed to polar residues. Positions 313–323 (RGYGSRSGGLR) are enriched in gly residues. The span at 336–346 (TNGNNVGNLTS) shows a compositional bias: polar residues. Residues Ala-406 and 446–451 (GTGKTM) each bind ATP.

It belongs to the AAA ATPase family. Mg(2+) serves as cofactor.

It localises to the nucleus. It carries out the reaction ATP + H2O = ADP + phosphate + H(+). In terms of biological role, involved in DNA double-strand break (DBS) repair via homologous recombination (HR). Limits class II meiotic crossover (CO) formation by regulating the invasion step of meiotic HR. May counteract DMC1 and RAD51-mediated inter-homolog strand invasion to limit CO formation. Functions independently of FANCM. This Arabidopsis thaliana (Mouse-ear cress) protein is ATPase family AAA domain-containing protein FIGL1.